The following is a 1052-amino-acid chain: Suppressor of RPS4-RLD 1 (1052 aa).

At Ala2 the chain carries N-acetylalanine. TPR repeat units follow at residues 39 to 72 and 74 to 106; these read ILDI…EPFA and QAFI…ALQQ. The stretch at 107–136 forms a coiled coil; it reads TADVKQLLELEELLKDARREIDGILKSHAT. The disordered stretch occupies residues 131 to 181; sequence LKSHATESPQETPAYHSEKSDEKSDKLDNHESGASSNGNSHESSSELGEQS. Residues 146–161 show a composition bias toward basic and acidic residues; sequence HSEKSDEKSDKLDNHE. Positions 162 to 181 are enriched in low complexity; that stretch reads SGASSNGNSHESSSELGEQS. 9 TPR repeats span residues 297–330, 331–364, 365–398, 400–432, 433–466, 468–500, 502–534, 535–567, and 569–591; these read VDFR…EPTY, PEAL…NPAA, SEAW…EPNS, DVLH…EKDN, KSAY…DSNY, EAWL…DNRV, KAYH…ENTI, ECLY…ELDA, and EKFV…ASKV. The tract at residues 704-739 is disordered; it reads STKGTTKNGKKNRRRERTNILSQNRGGAGCSSSSFS. The helical transmembrane segment at 966–986 threads the bilayer; it reads GTAVTGFVVLLGLLLAANMEF.

In terms of assembly, multimer. Interacts with EDS1. Interacts with SNC1 and RPS4. Interacts (via TPR domain) with SGT1 (via TPR domain). Interacts with the TCP transcription factors TCP8, TCP14, TCP15, TCP20, TCP22 and TCP23. In terms of tissue distribution, ubiquitous. Not detected in very young flowers and older siliques.

It is found in the nucleus. The protein localises to the cytoplasm. The protein resides in the perinuclear region. It localises to the membrane. Its subcellular location is the microsome. Functionally, negative regulator of effector-triggered immunity associated with the EDS1 resistance pathway. May localize its interactors to a microsomal membrane. May therefore negatively regulate RPS4 and SNC1 translocation to the nucleus. Contributes to the regulation of RPS2 and RPS4 protein levels and negatively regulates SNC1 stability. This chain is Suppressor of RPS4-RLD 1, found in Arabidopsis thaliana (Mouse-ear cress).